A 434-amino-acid polypeptide reads, in one-letter code: Adenylosuccinate synthetase (434 aa).

GTP is bound by residues 25–31 and 53–55; these read GDEGKGK and GHT. The active-site Proton acceptor is the Asp26. Positions 26 and 53 each coordinate Mg(2+). Residues 26 to 29, 51 to 54, Thr142, Arg156, Asn233, Thr248, and Arg312 each bind IMP; these read DEGK and NAGH. The Proton donor role is filled by His54. 308-314 is a binding site for substrate; sequence VTTGRKR. GTP contacts are provided by residues Arg314, 340 to 342, and 422 to 424; these read KLD and GVG.

It belongs to the adenylosuccinate synthetase family. In terms of assembly, homodimer. Requires Mg(2+) as cofactor.

It localises to the cytoplasm. It carries out the reaction IMP + L-aspartate + GTP = N(6)-(1,2-dicarboxyethyl)-AMP + GDP + phosphate + 2 H(+). The protein operates within purine metabolism; AMP biosynthesis via de novo pathway; AMP from IMP: step 1/2. Plays an important role in the de novo pathway and in the salvage pathway of purine nucleotide biosynthesis. Catalyzes the first committed step in the biosynthesis of AMP from IMP. The sequence is that of Adenylosuccinate synthetase from Schizosaccharomyces japonicus (strain yFS275 / FY16936) (Fission yeast).